A 167-amino-acid chain; its full sequence is Pathogenesis-related protein PRMS (167 aa).

An N-terminal signal peptide occupies residues 1–27 (MEASNKLAVLLLWLVMAAATAVHPSYS). One can recognise an SCP domain in the interval 37–155 (PQNSARAAVG…NRGVFIICNY (119 aa)). Disulfide bonds link cysteine 71/cysteine 143, cysteine 116/cysteine 122, and cysteine 138/cysteine 153.

This sequence belongs to the CRISP family.

Its function is as follows. Probably involved in the defense reaction of plants against pathogens. In Zea mays (Maize), this protein is Pathogenesis-related protein PRMS (PRMS).